Here is a 270-residue protein sequence, read N- to C-terminus: Putative ABC transporter ATP-binding protein MG304 (270 aa).

In terms of domain architecture, ABC transporter spans 1-232; sequence MLQVKNLSFK…LDLFHNHHFN (232 aa). Residue 36–43 participates in ATP binding; it reads GHNGSGKS.

It belongs to the ABC transporter superfamily.

The protein is Putative ABC transporter ATP-binding protein MG304 of Mycoplasma genitalium (strain ATCC 33530 / DSM 19775 / NCTC 10195 / G37) (Mycoplasmoides genitalium).